A 322-amino-acid chain; its full sequence is Phospholipase A1 (322 aa).

The signal sequence occupies residues methionine 1–glycine 18. A disulfide bridge links cysteine 23 with cysteine 106. The Nucleophile role is filled by serine 156. The active-site Charge relay system is aspartate 184. 2 cysteine pairs are disulfide-bonded: cysteine 195–cysteine 200 and cysteine 238–cysteine 246. Catalysis depends on histidine 248, which acts as the Charge relay system. Cystine bridges form between cysteine 263-cysteine 290, cysteine 264-cysteine 315, and cysteine 283-cysteine 288.

It belongs to the AB hydrolase superfamily. Lipase family. Contains six disulfide bonds. In terms of processing, is not glycosylated. In terms of tissue distribution, expressed by the venom gland.

Its subcellular location is the secreted. The catalysed reaction is a 1,2-diacyl-sn-glycero-3-phosphocholine + H2O = a 2-acyl-sn-glycero-3-phosphocholine + a fatty acid + H(+). Its function is as follows. Catalyzes the hydrolysis of phosphatidylcholine with phospholipase A1 activity. Shows hemolytic activity. Acts as an allergen. In Polybia paulista (Neotropical social wasp), this protein is Phospholipase A1.